Here is a 255-residue protein sequence, read N- to C-terminus: Protein N-terminal and lysine N-methyltransferase efm7 (255 aa).

Positions 1-25 (MADNDFEGFGIFEEPEGFRPSTPPP) are disordered. Residues Trp58, 84–86 (GAG), Asp106, Trp137, and Ser162 each bind S-adenosyl-L-methionine.

It belongs to the class I-like SAM-binding methyltransferase superfamily. EFM7 family.

It is found in the cytoplasm. In terms of biological role, S-adenosyl-L-methionine-dependent protein methyltransferase that trimethylates the N-terminal glycine 'Gly-2' of elongation factor 1-alpha, before also catalyzing the mono- and dimethylation of 'Lys-3'. The protein is Protein N-terminal and lysine N-methyltransferase efm7 of Schizosaccharomyces pombe (strain 972 / ATCC 24843) (Fission yeast).